We begin with the raw amino-acid sequence, 150 residues long: Protein-export protein SecB (150 aa).

This sequence belongs to the SecB family. Homotetramer, a dimer of dimers. One homotetramer interacts with 1 SecA dimer.

It is found in the cytoplasm. Functionally, one of the proteins required for the normal export of preproteins out of the cell cytoplasm. It is a molecular chaperone that binds to a subset of precursor proteins, maintaining them in a translocation-competent state. It also specifically binds to its receptor SecA. The protein is Protein-export protein SecB of Psychrobacter cryohalolentis (strain ATCC BAA-1226 / DSM 17306 / VKM B-2378 / K5).